The chain runs to 201 residues: FMN-dependent NADH:quinone oxidoreductase (201 aa).

FMN is bound by residues Ser-10, 16–18, 96–99, and 140–143; these read SQS, MYNF, and SRGG.

This sequence belongs to the azoreductase type 1 family. As to quaternary structure, homodimer. The cofactor is FMN.

The catalysed reaction is 2 a quinone + NADH + H(+) = 2 a 1,4-benzosemiquinone + NAD(+). The enzyme catalyses N,N-dimethyl-1,4-phenylenediamine + anthranilate + 2 NAD(+) = 2-(4-dimethylaminophenyl)diazenylbenzoate + 2 NADH + 2 H(+). Functionally, quinone reductase that provides resistance to thiol-specific stress caused by electrophilic quinones. Its function is as follows. Also exhibits azoreductase activity. Catalyzes the reductive cleavage of the azo bond in aromatic azo compounds to the corresponding amines. The chain is FMN-dependent NADH:quinone oxidoreductase from Pectobacterium atrosepticum (strain SCRI 1043 / ATCC BAA-672) (Erwinia carotovora subsp. atroseptica).